Reading from the N-terminus, the 384-residue chain is MPNASRVVIVAGEESGDHHAAELVKQLKAVYPDLEISGIGGKHLRAAGVHLISDLTRYAVTGLTEIIPFLKIFRKAFQDIKQHLSTQKPDLLILVDYPAFNLRLAKYAKKKLGLKIIYYISPQIWAWKGKRIHLIKDCIDKMAVIFPFEKTIYENAGVPVSFVGHPLVKKIAAAKDKHSSRTSLGLPLNEPIIALLPGSRHSEIERHIPILVNTAKLLTLDSPKLRFVVPIAGTINPDKVKAYFSNQNLTVTFIQGQAIECMSAADFVIVASGTASLECALLEKPMCIIYKSSFLTYVAAMYFIKVKFLGLCNLLANKMMVPEFLQYDCNAIELSRYISNFHNNPNQPESMINQLAKLKESLSSSQADCSLFDLVVAELPEKNA.

This sequence belongs to the LpxB family.

The enzyme catalyses a lipid X + a UDP-2-N,3-O-bis[(3R)-3-hydroxyacyl]-alpha-D-glucosamine = a lipid A disaccharide + UDP + H(+). The protein operates within bacterial outer membrane biogenesis; LPS lipid A biosynthesis. Condensation of UDP-2,3-diacylglucosamine and 2,3-diacylglucosamine-1-phosphate to form lipid A disaccharide, a precursor of lipid A, a phosphorylated glycolipid that anchors the lipopolysaccharide to the outer membrane of the cell. In Legionella pneumophila (strain Lens), this protein is Lipid-A-disaccharide synthase 1.